The primary structure comprises 123 residues: MAHYEEVNVRGYDEFCQAVSERKGKDIFAYFSGDKDASGKSWCPDCVTAEPIVRGQMSHLPEGSVFIYCQVGERAYWKDSTNAFKKTLKLSGVPTLLRYGTPQKLVEEECFKADLVRMMFTED.

The region spanning 41-123 (SWCPDCVTAE…DLVRMMFTED (83 aa)) is the Thioredoxin domain. Residues C43 and C46 each act as nucleophile in the active site. C43 and C46 are disulfide-bonded.

It belongs to the thioredoxin family. In terms of tissue distribution, predominantly expressed in liver, brain and muscle. Also expressed in kidney, intestine, skin, stomach, gill and head kidney.

It localises to the cytoplasm. Functionally, disulfide reductase. May participate in various redox reactions through the reversible oxidation of its active center dithiol to a disulfide and catalyze dithiol-disulfide exchange reactions. Has peroxidase activity and may contribute to the elimination of cellular hydrogen peroxide. May function as an antioxidant involved in response to viral infection. The sequence is that of Thioredoxin domain-containing protein 17 from Epinephelus coioides (Orange-spotted grouper).